We begin with the raw amino-acid sequence, 131 residues long: Glycine cleavage system H protein (131 aa).

Residues 24–106 (TVRVGITDYA…YGEGWLVDLR (83 aa)) form the Lipoyl-binding domain. Residue Lys65 is modified to N6-lipoyllysine.

Belongs to the GcvH family. As to quaternary structure, the glycine cleavage system is composed of four proteins: P, T, L and H. The cofactor is (R)-lipoate.

Its function is as follows. The glycine cleavage system catalyzes the degradation of glycine. The H protein shuttles the methylamine group of glycine from the P protein to the T protein. This is Glycine cleavage system H protein from Mycolicibacterium smegmatis (strain ATCC 700084 / mc(2)155) (Mycobacterium smegmatis).